Here is a 776-residue protein sequence, read N- to C-terminus: MASLIYRQLLANSYTVDLSDEIENIGYAKSKNVTINPGPFAQTGYAPVNWGPGEVNDSTTVEPVLDGPYQPTNFNPPVNYWMLLSPLNAGVVVEGTNSIDRWLATVLVEPNVTTTVRTYTLFGVQEQISVENNSTTKWKFINLIKTTPPGNFTLYSTLLSEPKLHGIMKHGGQLWVYNGETQTLLLQDYVTSNYDSLTMTSFCDFYIIPRNQESTCTEYINNGLPPIQNTRNVVSVSISSRNIIHNRAQVNEDIVISKTSLWKGVQYNRDIINRFRFANAIIKSGGLGYKWSEISFKPANYQYTYTRDGEEITAHTTCSVNGVNDFSFNGGSLPTDFVISRYEVIKENSYVYVDYWDDSQAFRNMVYVRSLAANLNDVLCTGGDYSFALPVGQWPVMTGGAVMLHAAGVTLSTQFTDFVSLNSLRFRFSLSVEEPYFSITRTRVTRLYGLPAVNPNNDRDYYEIAGRFSLISLVPSNDDYQTPIMNSVTVRQDLERQLGELREEFNALSQEIAISQLIDLALLPLDMFSMFSGIQSSIDAAKSMATNVMKKFKKSKLASSVSTLTNSLSDAASSVSRSSSIRSVSSSVSAWTDVSNQFTDISNSVNSISTQTSTISRRLRLKEIATQTEGINFDDISAAVLKTKIDKSTQIAANNIPDVITEASEKFIPNRAYRVISNDNVFEASTDGRFFAYKVGTFEEIPFDVQKLADLVTDSPVISAIIDFKTLKNLNDNYGITREQAFNLLRSDPRVLREFINQDNPIIKNRIEQLILQCRL.

The spike head stretch occupies residues 65–224 (LDGPYQPTNF…TCTEYINNGL (160 aa)). C203 and C216 are disulfide-bonded. The spike body and stalk (antigen domain) stretch occupies residues 248 to 479 (AQVNEDIVIS…LISLVPSNDD (232 aa)). A DGE motif; interaction with ITGA2/ITGB1 heterodimer motif is present at residues 308 to 310 (DGE). A disulfide bridge connects residues C318 and C380. Residues 389 to 409 (LPVGQWPVMTGGAVMLHAAGV) form a hydrophobic; possible role in virus entry into host cell region. The short motif at 448–450 (YGL) is the YGL motif; interaction with ITGA4 element. The stretch at 484–511 (IMNSVTVRQDLERQLGELREEFNALSQE) forms a coiled coil. Positions 510 to 776 (QEIAISQLID…IEQLILQCRL (267 aa)) are spike foot. The KID motif; interaction with HSPA8 motif lies at 644 to 646 (KID).

The protein belongs to the rotavirus VP4 family. In terms of assembly, homotrimer. VP4 adopts a dimeric appearance above the capsid surface, while forming a trimeric base anchored inside the capsid layer. Only hints of the third molecule are observed above the capsid surface. It probably performs a series of molecular rearrangements during viral entry. Prior to trypsin cleavage, it is flexible. The priming trypsin cleavage triggers its rearrangement into rigid spikes with approximate two-fold symmetry of their protruding parts. After an unknown second triggering event, cleaved VP4 may undergo another rearrangement, in which two VP5* subunits fold back on themselves and join a third subunit to form a tightly associated trimer, shaped like a folded umbrella. Interacts with VP6. Interacts with VP7. As to quaternary structure, homotrimer. The trimer is coiled-coil stabilized by its C-terminus, however, its N-terminus, known as antigen domain or 'body', seems to be flexible allowing it to self-associate either as a dimer or a trimer. In terms of processing, proteolytic cleavage by trypsin results in activation of VP4 functions and greatly increases infectivity. The penetration into the host cell is dependent on trypsin treatment of VP4. It produces two peptides, VP5* and VP8* that remain associated with the virion. Cleavage of VP4 by trypsin probably occurs in vivo in the lumen of the intestine prior to infection of enterocytes. Trypsin seems to be incorporated into the three-layered viral particles but remains inactive as long as the viral outer capsid is intact and would only be activated upon the solubilization of the latter.

The protein resides in the virion. It is found in the host rough endoplasmic reticulum. Its subcellular location is the host cell membrane. The protein localises to the host cytoplasm. It localises to the host cytoskeleton. The protein resides in the host endoplasmic reticulum-Golgi intermediate compartment. Its function is as follows. Spike-forming protein that mediates virion attachment to the host epithelial cell receptors and plays a major role in cell penetration, determination of host range restriction and virulence. Rotavirus attachment and entry into the host cell probably involves multiple sequential contacts between the outer capsid proteins VP4 and VP7, and the cell receptors. It is subsequently lost, together with VP7, following virus entry into the host cell. Following entry into the host cell, low intracellular or intravesicular Ca(2+) concentration probably causes the calcium-stabilized VP7 trimers to dissociate from the virion. This step is probably necessary for the membrane-disrupting entry step and the release of VP4, which is locked onto the virion by VP7. During the virus exit from the host cell, VP4 seems to be required to target the newly formed virions to the host cell lipid rafts. Forms the spike 'foot' and 'body' and acts as a membrane permeabilization protein that mediates release of viral particles from endosomal compartments into the cytoplasm. During entry, the part of VP5* that protrudes from the virus folds back on itself and reorganizes from a local dimer to a trimer. This reorganization may be linked to membrane penetration by exposing VP5* hydrophobic region. In integrin-dependent strains, VP5* targets the integrin heterodimer ITGA2/ITGB1 for cell attachment. In terms of biological role, forms the head of the spikes and mediates the recognition of specific host cell surface glycans. It is the viral hemagglutinin and an important target of neutralizing antibodies. In sialic acid-dependent strains, VP8* binds to host cell sialic acid, most probably a ganglioside, providing the initial contact. In some other strains, VP8* mediates the attachment to histo-blood group antigens (HBGAs) for viral entry. The protein is Outer capsid protein VP4 of Rotavirus A (strain RVA/Equine/United States/FI-14/1980/G3P4[12]) (RV-A).